Here is a 794-residue protein sequence, read N- to C-terminus: Zinc finger protein 148 (794 aa).

Lys-6 is covalently cross-linked (Glycyl lysine isopeptide (Lys-Gly) (interchain with G-Cter in SUMO2)). Ser-51 carries the post-translational modification Phosphoserine. Residues Lys-88, Lys-115, and Lys-132 each participate in a glycyl lysine isopeptide (Lys-Gly) (interchain with G-Cter in SUMO2) cross-link. A C2H2-type 1 zinc finger spans residues 171–193 (HVCEHCNAAFRTNYHLQRHVFIH). The residue at position 194 (Thr-194) is a Phosphothreonine. 2 C2H2-type zinc fingers span residues 199–221 (FQCSQCDMRFIQKYLLQRHEKIH) and 227–249 (FRCDECGMRFIQKYHMERHKRTH). The residue at position 250 (Ser-250) is a Phosphoserine. Residues 255–278 (YQCEYCLQYFSRTDRVLKHKRMCH) form a C2H2-type 4 zinc finger. A Glycyl lysine isopeptide (Lys-Gly) (interchain with G-Cter in SUMO2) cross-link involves residue Lys-291. The disordered stretch occupies residues 298 to 346 (EEDSGFSTSPKDNSLPKKKRQKPEKKSSGMDKESVLDKSDTKKDRNDYL). Residues Ser-301 and Ser-306 each carry the phosphoserine modification. Lys-308 participates in a covalent cross-link: Glycyl lysine isopeptide (Lys-Gly) (interchain with G-Cter in SUMO2). A compositionally biased stretch (basic and acidic residues) spans 321–344 (EKKSSGMDKESVLDKSDTKKDRND). A Glycyl lysine isopeptide (Lys-Gly) (interchain with G-Cter in SUMO1); alternate cross-link involves residue Lys-356. Lys-356 is covalently cross-linked (Glycyl lysine isopeptide (Lys-Gly) (interchain with G-Cter in SUMO2); alternate). Lys-402 is covalently cross-linked (Glycyl lysine isopeptide (Lys-Gly) (interchain with G-Cter in SUMO2)). Ser-412 is subject to Phosphoserine. Residues Lys-421 and Lys-424 each participate in a glycyl lysine isopeptide (Lys-Gly) (interchain with G-Cter in SUMO2) cross-link. Residues 574–588 (NSSDVPEVTQSENVG) show a composition bias toward polar residues. Residues 574–596 (NSSDVPEVTQSENVGSSSQASSS) form a disordered region. An N6-acetyllysine modification is found at Lys-607. 2 positions are modified to phosphoserine: Ser-665 and Ser-784.

It belongs to the krueppel C2H2-type zinc-finger protein family. Interacts with HNRNPDL. Interacts with the 5FMC complex; the interaction requires association with CHTOP. Interacts with CAVIN1. In terms of processing, sumoylated with SUMO2. Desumoylated by SENP3, resulting in the stimulation of transcription of its target genes. Expressed in heart, lung, kidney, skeletal muscle, liver, brain and spleen.

The protein resides in the nucleus. Functionally, involved in transcriptional regulation. Represses the transcription of a number of genes including gastrin, stromelysin and enolase. Binds to the G-rich box in the enhancer region of these genes. The protein is Zinc finger protein 148 (Znf148) of Rattus norvegicus (Rat).